The chain runs to 165 residues: MAKLILVFATLALFILLANASIYRTVVEFEEDDDVSNPQQGKCQREFMKHQQLRGCKQWIRKRAQQGRIGYEADDFELTLDVDLEDDENPMGPQQQSSLKMCCNELRQVDKMCVCPTLKKAAQQVRFQGMHGQQQVQHVFQTAKNLPNVCKIPTVGSCQFKASPY.

Residues Met1 to Ala20 form the signal peptide. Propeptides lie at residues Ser21–Asn37 and Tyr71–Asn89.

The protein belongs to the 2S seed storage albumins family. As to quaternary structure, the mature protein consists of a small and a large chain linked by disulfide bonds.

Functionally, this is a 2S seed storage protein. The polypeptide is 2S seed storage protein 5 (SESA5) (Arabidopsis thaliana (Mouse-ear cress)).